The following is a 502-amino-acid chain: Cytochrome P450 monooxygenase verC (502 aa).

Residues 9–29 traverse the membrane as a helical segment; it reads IAALPMVSLLGAALIVVSVLG. Residues Asn-124, Asn-190, Asn-271, and Asn-342 are each glycosylated (N-linked (GlcNAc...) asparagine). Residue Cys-444 coordinates heme.

The protein belongs to the cytochrome P450 family. It depends on heme as a cofactor.

It is found in the membrane. The protein operates within mycotoxin biosynthesis. Its function is as follows. Cytochrome P450 monooxygenase; part of the gene cluster that mediates the biosynthesis of 11'-deoxyverticillin A, one of the dimeric epipolythiodioxopiperazines (ETPs) from the verticillin family that act as mycotoxins. 11'-deoxyverticillin A is required for normal conidiation. The nonribosomal peptide synthetase verP is speculated to be responsible for condensation of amino acids to form the carbon skeleton of verticillin, whereas the cluster-specific tailoring enzymes are involved in further modifications leading to the production of 11'-deoxyverticillin A. This Clonostachys rogersoniana protein is Cytochrome P450 monooxygenase verC.